The sequence spans 217 residues: Eukaryotic translation initiation factor 4E (217 aa).

The interval 1-30 (MATVEPETTPTPNPPTTEEEKTESNQEVAN) is disordered. At A2 the chain carries N-acetylalanine. T22 is modified (phosphothreonine). Positions 37-40 (HPLQ) are EIF4EBP1/2/3 binding. 56-57 (WQ) contacts mRNA. Residues 73 to 77 (WALYN) are EIF4EBP1/2/3 binding. MRNA is bound at residue 102–103 (WE). Positions 132-139 (ETLLCLIG) are EIF4EBP1/2/3 binding. MRNA is bound by residues 157–162 (RAKGDK) and 205–207 (TKS). S209 carries the post-translational modification Phosphoserine; by PKC and MKNK2.

The protein belongs to the eukaryotic initiation factor 4E family. EIF4F is a multi-subunit complex, the composition of which varies with external and internal environmental conditions. It is composed of at least EIF4A, EIF4E and EIF4G1/EIF4G3. EIF4E is also known to interact with other partners. Interacts with EIF4ENIF1/4E-T; promotes recruitment to P-bodies and import into the nucleus. Hypophosphorylated EIF4EBP1, EIF4EBP2 and EIF4EBP3 compete with EIF4G1/EIF4G3 to interact with EIF4E; insulin stimulated MAP-kinase (MAPK1 and MAPK3) phosphorylation of EIF4EBP1 causes dissociation of the complex allowing EIF4G1/EIF4G3 to bind and consequent initiation of translation. Interacts mutually exclusive with EIF4A1 or EIF4A2. Interacts with NGDN and PIWIL2. Component of the CYFIP1-EIF4E-FMR1 complex composed of CYFIP, EIF4E and FMR1. Interacts directly with CYFIP1. Interacts with CLOCK. Binds to MKNK2 in nucleus. Interacts with LIMD1, WTIP and AJUBA. Interacts with APOBEC3G in an RNA-dependent manner. Interacts with LARP1. Interacts with METTL3. Interacts with RBM24; this interaction prevents EIF4E from binding to p53/TP53 mRNA and inhibits the assembly of translation initiation complex. Interacts with DDX3X; interaction is direct and in an RNA-independent manner; this interaction enhances EIF4E cap-binding ability and is required for the repression of cap-dependent translation and the increase of IRES-mediated translation. DDX3X competes with EIF4G1 for interaction with EIF4E. Interacts with EIF4G1; which in a mutual exclusive interaction associates either with EIF1 or with EIF4E on a common binding site. Interacts with BTG4 and CNOT7. Interacts with LRPPRC (via N-terminus); the interaction promotes association of EIF4E with 4ESE-containing mRNAs. Interacts with mRNA cleavage enzyme CPSF3 and its cofactor CPSF1. Interacts (via RING-type zinc finger) with PML; the interaction results in conformational changes of both interacting proteins and reduces EIF4E affinity for the 5' m7G cap of mRNA, thus reducing EIF4E-mediated mRNA nuclear export. Interacts with homeobox protein HHEX/PRH; the interaction inhibits EIF4E-mediated mRNA nuclear export. Interacts with homeobox protein HOXA9; the interaction positively regulates EIF4E-mediated mRNA nuclear export. Interacts with homeobox protein EMX2. As to quaternary structure, (Microbial infection) Interacts with Lassa virus Z protein. In terms of assembly, (Microbial infection) Interacts with Lymphocytic choriomeningitis virus (LCMV) Z protein (via RING-type zinc finger); the interaction results in conformational changes of both interacting proteins and reduces EIF4E affinity for the m7G mRNA cap structure. (Microbial infection) Interacts (via cap-binding region) with potato virus Y VPg; this interaction mediates the translation of the VPg-viral RNA conjugates and interferes with the cellular EIF4E-dependent mRNA export and translation. Post-translationally, phosphorylation increases the ability of the protein to bind to mRNA caps and to form the eIF4F complex. Phosphorylation also enhances its mRNA transport function. Phosphorylation at Ser-209 is not essential for protein synthesis.

It is found in the cytoplasm. It localises to the P-body. The protein localises to the stress granule. Its subcellular location is the nucleus. The protein resides in the nucleus speckle. It is found in the nuclear body. In terms of biological role, acts in the cytoplasm to initiate and regulate protein synthesis and is required in the nucleus for export of a subset of mRNAs from the nucleus to the cytoplasm which promotes processes such as RNA capping, processing and splicing. Component of the protein complex eIF4F, which is involved in the recognition of the mRNA cap, ATP-dependent unwinding of 5'-terminal secondary structure and recruitment of mRNA to the ribosome. This protein recognizes and binds the 7-methylguanosine (m7G)-containing mRNA cap during an early step in the initiation of protein synthesis and facilitates ribosome binding by inducing the unwinding of the mRNAs secondary structures. Together with EIF4G1, antagonizes the scanning promoted by EIF1-EIF4G1 and is required for TISU translation, a process where the TISU element recognition makes scanning unnecessary. In addition to its role in translation initiation, also acts as a regulator of translation and stability in the cytoplasm. Component of the CYFIP1-EIF4E-FMR1 complex which binds to the mRNA cap and mediates translational repression: in the complex, EIF4E mediates the binding to the mRNA cap. Component of a multiprotein complex that sequesters and represses translation of proneurogenic factors during neurogenesis. In P-bodies, component of a complex that mediates the storage of translationally inactive mRNAs in the cytoplasm and prevents their degradation. May play an important role in spermatogenesis through translational regulation of stage-specific mRNAs during germ cell development. As well as its roles in translation, also involved in mRNA nucleocytoplasmic transport. Its role in mRNA export from the nucleus to the cytoplasm relies on its ability to bind the m7G cap of RNAs and on the presence of the 50-nucleotide EIF4E sensitivity element (4ESE) in the 3'UTR of sensitive transcripts. Interaction with the 4ESE is mediated by LRPPRC which binds simultaneously to both EIF4E and the 4ESE, thereby acting as a platform for assembly for the RNA export complex. EIF4E-dependent mRNA export is independent of ongoing protein or RNA synthesis and is also NFX1-independent but is XPO1-dependent with LRPPRC interacting with XPO1 to form an EIF4E-dependent mRNA export complex. Alters the composition of the cytoplasmic face of the nuclear pore to promote RNA export by reducing RANBP2 expression, relocalizing nucleoporin NUP214 and increasing expression of RANBP1 and RNA export factors DDX19 and GLE1. Promotes the nuclear export of cyclin CCND1 mRNA. Promotes the nuclear export of NOS2/iNOS mRNA. Promotes the nuclear export of MDM2 mRNA. Promotes the export of additional mRNAs, including others involved in the cell cycle. In the nucleus, binds to capped splice factor-encoding mRNAs and stimulates their nuclear export to enhance splice factor production by increasing their cytoplasmic availability to the translation machinery. May also regulate splicing through interaction with the spliceosome in an RNA and m7G cap-dependent manner. Also binds to some pre-mRNAs and may play a role in their recruitment to the spliceosome. Promotes steady-state capping of a subset of coding and non-coding RNAs by mediating nuclear export of capping machinery mRNAs including RNMT, RNGTT and RAMAC to enhance their translation. Stimulates mRNA 3'-end processing by promoting the expression of several core cleavage complex factors required for mRNA cleavage and polyadenylation, and may also have a direct effect through its interaction with the CPSF3 cleavage enzyme. Rescues cells from apoptosis by promoting activation of serine/threonine-protein kinase AKT1 through mRNA export of NBS1 which potentiates AKT1 phosphorylation and also through mRNA export of AKT1 effectors, allowing for increased production of these proteins. In Homo sapiens (Human), this protein is Eukaryotic translation initiation factor 4E.